The chain runs to 232 residues: 2-C-methyl-D-erythritol 4-phosphate cytidylyltransferase (232 aa).

The protein belongs to the IspD/TarI cytidylyltransferase family. IspD subfamily.

The enzyme catalyses 2-C-methyl-D-erythritol 4-phosphate + CTP + H(+) = 4-CDP-2-C-methyl-D-erythritol + diphosphate. It functions in the pathway isoprenoid biosynthesis; isopentenyl diphosphate biosynthesis via DXP pathway; isopentenyl diphosphate from 1-deoxy-D-xylulose 5-phosphate: step 2/6. Catalyzes the formation of 4-diphosphocytidyl-2-C-methyl-D-erythritol from CTP and 2-C-methyl-D-erythritol 4-phosphate (MEP). This Neorickettsia sennetsu (strain ATCC VR-367 / Miyayama) (Ehrlichia sennetsu) protein is 2-C-methyl-D-erythritol 4-phosphate cytidylyltransferase.